The sequence spans 204 residues: Holliday junction branch migration complex subunit RuvA (204 aa).

The interval 1–64 is domain I; the sequence is MIGKLKGTID…EDQLKLFGFM (64 aa). A domain II region spans residues 65–143; that stretch reads TALEREWFNL…AFAGEAINIA (79 aa). The flexible linker stretch occupies residues 144–151; it reads LKQELGEG. A domain III region spans residues 152–204; sequence VAAAPVADAVSALTNLGYSRDQAANAVAAAMKTAGDDADSAKLIRLGLKELAR.

Belongs to the RuvA family. In terms of assembly, homotetramer. Forms an RuvA(8)-RuvB(12)-Holliday junction (HJ) complex. HJ DNA is sandwiched between 2 RuvA tetramers; dsDNA enters through RuvA and exits via RuvB. An RuvB hexamer assembles on each DNA strand where it exits the tetramer. Each RuvB hexamer is contacted by two RuvA subunits (via domain III) on 2 adjacent RuvB subunits; this complex drives branch migration. In the full resolvosome a probable DNA-RuvA(4)-RuvB(12)-RuvC(2) complex forms which resolves the HJ.

It localises to the cytoplasm. The RuvA-RuvB-RuvC complex processes Holliday junction (HJ) DNA during genetic recombination and DNA repair, while the RuvA-RuvB complex plays an important role in the rescue of blocked DNA replication forks via replication fork reversal (RFR). RuvA specifically binds to HJ cruciform DNA, conferring on it an open structure. The RuvB hexamer acts as an ATP-dependent pump, pulling dsDNA into and through the RuvAB complex. HJ branch migration allows RuvC to scan DNA until it finds its consensus sequence, where it cleaves and resolves the cruciform DNA. This chain is Holliday junction branch migration complex subunit RuvA, found in Rhizobium leguminosarum bv. trifolii (strain WSM2304).